The sequence spans 930 residues: Translation initiation factor IF-2 (930 aa).

The segment covering 50–67 (FKPAAAPKVEAKPAAPKV) has biased composition (low complexity). Disordered stretches follow at residues 50 to 217 (FKPA…SSEE) and 260 to 346 (EVVP…HELP). Composition is skewed to basic and acidic residues over residues 68–90 (SAEK…EAKP) and 110–125 (FKAE…AERR). The span at 129 to 141 (KGNNRDQQQNGNR) shows a compositional bias: low complexity. Composition is skewed to basic and acidic residues over residues 157–167 (RDNRRFNDQAK) and 262–295 (VPEK…DGPR). A compositionally biased stretch (low complexity) spans 309-318 (NQKNSNWNNN). The span at 337-346 (VTERKFHELP) shows a compositional bias: basic and acidic residues. A tr-type G domain is found at 432-599 (ERPPVVTIMG…TVLLVAEIQE (168 aa)). The G1 stretch occupies residues 441–448 (GHVDHGKT). Residue 441-448 (GHVDHGKT) coordinates GTP. The tract at residues 466-470 (GITQH) is G2. Positions 487–490 (DTPG) are G3. GTP-binding positions include 487 to 491 (DTPGH) and 541 to 544 (NKID). The G4 stretch occupies residues 541–544 (NKID). Residues 577-579 (SAK) are G5.

It belongs to the TRAFAC class translation factor GTPase superfamily. Classic translation factor GTPase family. IF-2 subfamily.

It is found in the cytoplasm. Its function is as follows. One of the essential components for the initiation of protein synthesis. Protects formylmethionyl-tRNA from spontaneous hydrolysis and promotes its binding to the 30S ribosomal subunits. Also involved in the hydrolysis of GTP during the formation of the 70S ribosomal complex. In Streptococcus pneumoniae (strain CGSP14), this protein is Translation initiation factor IF-2.